The primary structure comprises 627 residues: Mitochondrial Rho GTPase 1 (627 aa).

The Miro 1 domain occupies 1-169 (MATVRICVCG…FFLCQKAVTH (169 aa)). The Cytoplasmic portion of the chain corresponds to 1 to 599 (MATVRICVCG…PRSNEEGPDR (599 aa)). Residues 10–17 (GDESTGKS), 58–62 (DTSAR), and 114–117 (NKSD) contribute to the GTP site. 2 consecutive EF-hand domains span residues 185–220 (LCINALKRIFYLCDKDQDGYLNEQEMRDFQARCFDK) and 305–340 (AGYRFFVDLFLIFDKDNDGGLNDEELEALFAPAPGL). D198, D200, D202, Y204, E209, D318, D320, D322, and E329 together coordinate Ca(2+). The 165-residue stretch at 420 to 584 (RNVVLCYVLG…FVAYADAATT (165 aa)) folds into the Miro 2 domain. Residues 429-436 (GASGAGKS), 465-469 (ELPGG), and 534-537 (LKAD) each bind GTP. A helical; Anchor for type IV membrane protein membrane pass occupies residues 600-620 (TSLYIALGATACAGVAALTIW). The Mitochondrial intermembrane portion of the chain corresponds to 621–627 (RRATNAL).

It belongs to the mitochondrial Rho GTPase family.

Its subcellular location is the mitochondrion outer membrane. In terms of biological role, mitochondrial GTPase involved in mitochondrial trafficking. Probably involved in control of anterograde transport of mitochondria and their subcellular distribution. This is Mitochondrial Rho GTPase 1 (GEM1) from Gibberella zeae (strain ATCC MYA-4620 / CBS 123657 / FGSC 9075 / NRRL 31084 / PH-1) (Wheat head blight fungus).